The primary structure comprises 71 residues: DNA-directed RNA polymerase subunit epsilon (71 aa).

Belongs to the RNA polymerase subunit epsilon family. In terms of assembly, RNAP is composed of a core of 2 alpha, a beta and a beta' subunit. The core is associated with a delta subunit, and at least one of epsilon or omega. When a sigma factor is associated with the core the holoenzyme is formed, which can initiate transcription.

It catalyses the reaction RNA(n) + a ribonucleoside 5'-triphosphate = RNA(n+1) + diphosphate. In terms of biological role, a non-essential component of RNA polymerase (RNAP). The polypeptide is DNA-directed RNA polymerase subunit epsilon (Geobacillus kaustophilus (strain HTA426)).